Here is a 40-residue protein sequence, read N- to C-terminus: Large ribosomal subunit protein bL36B (40 aa).

This sequence belongs to the bacterial ribosomal protein bL36 family.

In Clavibacter michiganensis subsp. michiganensis (strain NCPPB 382), this protein is Large ribosomal subunit protein bL36B.